A 363-amino-acid chain; its full sequence is Pyruvate dehydrogenase E1 component subunit beta-1, mitochondrial (363 aa).

The N-terminal 29 residues, 1–29 (MLGILRQRAIDGASTLRRTRFALVSARSY), are a transit peptide targeting the mitochondrion. Glutamate 92 lines the thiamine diphosphate pocket. Residues isoleucine 145, alanine 193, isoleucine 194, and aspartate 196 each coordinate K(+). Glycyl lysine isopeptide (Lys-Gly) (interchain with G-Cter in ubiquitin) cross-links involve residues lysine 247 and lysine 254.

In terms of assembly, tetramer of 2 alpha and 2 beta subunits. Requires thiamine diphosphate as cofactor. In terms of tissue distribution, expressed in roots, immature rosettes, and mature rosettes.

Its subcellular location is the mitochondrion matrix. The catalysed reaction is N(6)-[(R)-lipoyl]-L-lysyl-[protein] + pyruvate + H(+) = N(6)-[(R)-S(8)-acetyldihydrolipoyl]-L-lysyl-[protein] + CO2. The pyruvate dehydrogenase complex catalyzes the overall conversion of pyruvate to acetyl-CoA and CO(2). It contains multiple copies of three enzymatic components: pyruvate dehydrogenase (E1), dihydrolipoamide acetyltransferase (E2) and lipoamide dehydrogenase (E3). The protein is Pyruvate dehydrogenase E1 component subunit beta-1, mitochondrial (PDH2) of Arabidopsis thaliana (Mouse-ear cress).